The chain runs to 319 residues: MSLNFLEFEKPIAELEAKIEALRDISRRGGDNALDLDKEIKQLEDKCLDLKKKTFSDLGAWEVAQLARHPERPYVLDYIELMFTEFDELAGDRAFADDKALVGGMARLDGRPVMIIGHQKGRGTKEKVRRNFGMPKPEGYRKAKRLMQMAERFKMPIITFIDTAGAYPGVGAEERGQSEAIATNLKIMSELSVPVICNVVGEGGSGGALAIGVGDYVNMLQYSTYSVISPEGCASILWRDSDKAPQAAEAMGLVAPRLKELELIDTIIDEPLGGAHRNHKATAENIKQRLIEQLNELEGFDEEALLERRYQRLMNYGYC.

A CoA carboxyltransferase C-terminal domain is found at aspartate 35–glutamate 296.

This sequence belongs to the AccA family. Acetyl-CoA carboxylase is a heterohexamer composed of biotin carboxyl carrier protein (AccB), biotin carboxylase (AccC) and two subunits each of ACCase subunit alpha (AccA) and ACCase subunit beta (AccD).

The protein localises to the cytoplasm. It carries out the reaction N(6)-carboxybiotinyl-L-lysyl-[protein] + acetyl-CoA = N(6)-biotinyl-L-lysyl-[protein] + malonyl-CoA. It functions in the pathway lipid metabolism; malonyl-CoA biosynthesis; malonyl-CoA from acetyl-CoA: step 1/1. Its function is as follows. Component of the acetyl coenzyme A carboxylase (ACC) complex. First, biotin carboxylase catalyzes the carboxylation of biotin on its carrier protein (BCCP) and then the CO(2) group is transferred by the carboxyltransferase to acetyl-CoA to form malonyl-CoA. The polypeptide is Acetyl-coenzyme A carboxylase carboxyl transferase subunit alpha (Aliivibrio salmonicida (strain LFI1238) (Vibrio salmonicida (strain LFI1238))).